We begin with the raw amino-acid sequence, 844 residues long: Leucine--tRNA ligase (844 aa).

The short motif at 39-49 is the 'HIGH' region element; it reads PYPSGRIHMGH. The 'KMSKS' region signature appears at 621–625; sequence KMSKS. An ATP-binding site is contributed by K624.

The protein belongs to the class-I aminoacyl-tRNA synthetase family.

Its subcellular location is the cytoplasm. The catalysed reaction is tRNA(Leu) + L-leucine + ATP = L-leucyl-tRNA(Leu) + AMP + diphosphate. The protein is Leucine--tRNA ligase of Paracoccus denitrificans (strain Pd 1222).